Reading from the N-terminus, the 348-residue chain is Holliday junction branch migration complex subunit RuvB (348 aa).

Positions 4-184 are large ATPase domain (RuvB-L); that stretch reads ADRLIAASGR…FGIVQRLEFY (181 aa). Residues Ile-23, Arg-24, Gly-65, Lys-68, Thr-69, Thr-70, 131-133, Arg-174, Tyr-184, and Arg-221 each bind ATP; that span reads EDF. Mg(2+) is bound at residue Thr-69. The interval 185 to 255 is small ATPAse domain (RuvB-S); that stretch reads SDKDLATIVS…VADLALNLLD (71 aa). The tract at residues 258-348 is head domain (RuvB-H); it reads ERGFDHSDRR…GADFSEAGDE (91 aa). Positions 294, 313, and 318 each coordinate DNA.

The protein belongs to the RuvB family. In terms of assembly, homohexamer. Forms an RuvA(8)-RuvB(12)-Holliday junction (HJ) complex. HJ DNA is sandwiched between 2 RuvA tetramers; dsDNA enters through RuvA and exits via RuvB. An RuvB hexamer assembles on each DNA strand where it exits the tetramer. Each RuvB hexamer is contacted by two RuvA subunits (via domain III) on 2 adjacent RuvB subunits; this complex drives branch migration. In the full resolvosome a probable DNA-RuvA(4)-RuvB(12)-RuvC(2) complex forms which resolves the HJ.

Its subcellular location is the cytoplasm. It catalyses the reaction ATP + H2O = ADP + phosphate + H(+). The RuvA-RuvB-RuvC complex processes Holliday junction (HJ) DNA during genetic recombination and DNA repair, while the RuvA-RuvB complex plays an important role in the rescue of blocked DNA replication forks via replication fork reversal (RFR). RuvA specifically binds to HJ cruciform DNA, conferring on it an open structure. The RuvB hexamer acts as an ATP-dependent pump, pulling dsDNA into and through the RuvAB complex. RuvB forms 2 homohexamers on either side of HJ DNA bound by 1 or 2 RuvA tetramers; 4 subunits per hexamer contact DNA at a time. Coordinated motions by a converter formed by DNA-disengaged RuvB subunits stimulates ATP hydrolysis and nucleotide exchange. Immobilization of the converter enables RuvB to convert the ATP-contained energy into a lever motion, pulling 2 nucleotides of DNA out of the RuvA tetramer per ATP hydrolyzed, thus driving DNA branch migration. The RuvB motors rotate together with the DNA substrate, which together with the progressing nucleotide cycle form the mechanistic basis for DNA recombination by continuous HJ branch migration. Branch migration allows RuvC to scan DNA until it finds its consensus sequence, where it cleaves and resolves cruciform DNA. The sequence is that of Holliday junction branch migration complex subunit RuvB from Pseudomonas putida (strain W619).